The sequence spans 218 residues: Peptide methionine sulfoxide reductase MsrA (218 aa).

Positions 1-28 (MSFLDSYRKKTQMPSTDEALPGRAQPIP) are disordered. The active site involves Cys57.

Belongs to the MsrA Met sulfoxide reductase family.

It catalyses the reaction L-methionyl-[protein] + [thioredoxin]-disulfide + H2O = L-methionyl-(S)-S-oxide-[protein] + [thioredoxin]-dithiol. The enzyme catalyses [thioredoxin]-disulfide + L-methionine + H2O = L-methionine (S)-S-oxide + [thioredoxin]-dithiol. Its function is as follows. Has an important function as a repair enzyme for proteins that have been inactivated by oxidation. Catalyzes the reversible oxidation-reduction of methionine sulfoxide in proteins to methionine. The sequence is that of Peptide methionine sulfoxide reductase MsrA from Brucella anthropi (strain ATCC 49188 / DSM 6882 / CCUG 24695 / JCM 21032 / LMG 3331 / NBRC 15819 / NCTC 12168 / Alc 37) (Ochrobactrum anthropi).